We begin with the raw amino-acid sequence, 178 residues long: ATP-dependent protease subunit HslV (178 aa).

Residue T7 is part of the active site. Positions 162, 165, and 168 each coordinate Na(+).

Belongs to the peptidase T1B family. HslV subfamily. In terms of assembly, a double ring-shaped homohexamer of HslV is capped on each side by a ring-shaped HslU homohexamer. The assembly of the HslU/HslV complex is dependent on binding of ATP.

The protein resides in the cytoplasm. It catalyses the reaction ATP-dependent cleavage of peptide bonds with broad specificity.. With respect to regulation, allosterically activated by HslU binding. Its function is as follows. Protease subunit of a proteasome-like degradation complex believed to be a general protein degrading machinery. This Cupriavidus taiwanensis (strain DSM 17343 / BCRC 17206 / CCUG 44338 / CIP 107171 / LMG 19424 / R1) (Ralstonia taiwanensis (strain LMG 19424)) protein is ATP-dependent protease subunit HslV.